The primary structure comprises 693 residues: Golgin subfamily A member 6D (693 aa).

Positions 14 to 611 (LEESRQNKLA…KLLELQELVL (598 aa)) form a coiled coil. 3 disordered regions span residues 20–70 (NKLA…GDSQ), 497–547 (LPGE…GTEQ), and 662–693 (VEPAPGVAREGSPHNNPTVQQIVQLSPVMQDT). Positions 537 to 547 (LPKEKADGTEQ) are enriched in basic and acidic residues. The span at 674–693 (PHNNPTVQQIVQLSPVMQDT) shows a compositional bias: polar residues.

It belongs to the GOLGA6 family.

The sequence is that of Golgin subfamily A member 6D (GOLGA6D) from Homo sapiens (Human).